The chain runs to 859 residues: Envelope glycoprotein (859 aa).

The propeptide occupies 1 to 6 (MVSIAF). At 7–614 (YGGIPGGIST…KDLWSHIGNW (608 aa)) the chain is on the extracellular side. Residue Asn40 is glycosylated (N-linked (GlcNAc...) asparagine; by host). The tract at residues 47–66 (AESKEARDQEMNLKEESKEE) is disordered. The span at 48-66 (ESKEARDQEMNLKEESKEE) shows a compositional bias: basic and acidic residues. N-linked (GlcNAc...) asparagine; by host glycosylation is found at Asn112, Asn141, Asn148, Asn186, Asn214, Asn233, Asn244, Asn340, Asn368, Asn399, Asn406, and Asn411. The interval 446–466 (FGISAIVAAIVAATAIAASAT) is fusion peptide. Asn483 and Asn490 each carry an N-linked (GlcNAc...) asparagine; by host glycan. An immunosuppression region spans residues 498 to 513 (LIERQIKILYAMILQT). 2 N-linked (GlcNAc...) asparagine; by host glycosylation sites follow: Asn550 and Asn557. Coiled-coil stretches lie at residues 576–624 (ILTT…SIIK) and 663–699 (KKFH…YYKQ). The chain crosses the membrane as a helical span at residues 615-635 (IPGLGASIIKYIVMFLLIYLL). At 636–859 (LTSSPKILRA…TSHVSMPQYV (224 aa)) the chain is on the cytoplasmic side.

As to quaternary structure, the mature envelope protein (Env) consists of a trimer of SU-TM heterodimers attached by noncovalent interactions or by a labile interchain disulfide bond. In terms of processing, specific enzymatic cleavages in vivo yield mature proteins. Envelope glycoproteins are synthesized as an inactive precursor that is N-glycosylated and processed likely by host cell furin or by a furin-like protease in the Golgi to yield the mature SU and TM proteins. The cleavage site between SU and TM requires the minimal sequence [KR]-X-[KR]-R.

The protein localises to the virion membrane. It is found in the host cell membrane. In terms of biological role, the surface protein (SU) attaches the virus to the host cell by binding to its receptor. This interaction triggers the refolding of the transmembrane protein (TM) and is thought to activate its fusogenic potential by unmasking its fusion peptide. Fusion occurs at the host cell plasma membrane. Functionally, the transmembrane protein (TM) acts as a class I viral fusion protein. Under the current model, the protein has at least 3 conformational states: pre-fusion native state, pre-hairpin intermediate state, and post-fusion hairpin state. During viral and target cell membrane fusion, the coiled coil regions (heptad repeats) assume a trimer-of-hairpins structure, positioning the fusion peptide in close proximity to the C-terminal region of the ectodomain. The formation of this structure appears to drive apposition and subsequent fusion of viral and target cell membranes. Membranes fusion leads to delivery of the nucleocapsid into the cytoplasm. The polypeptide is Envelope glycoprotein (env) (Equus asinus (Donkey)).